A 552-amino-acid chain; its full sequence is MTSLREFRKLCCAIYHASGYKEKSKLIRDFITDRDDKYLIIKLLLPGLDDRIYNMNDKQIIKIYSIIFKQSQKDMLQDLGYGYIGDTISTFFKENTEIRPRNKSILTLEDVDSFLTTLSSITKESHQIKLLTDIASVCTCNDLKCVVMLIDKDLKIKAGPRYVLNAISPHAYDVFRKSNNLKEIIENESKQNLDSISVSVMTPINPMLAESCDSVNKAFKKFPSGMFAEVKYDGERVQVHKNNNEFAFFSRNMKPVLSYKVDYLKEYIPKAFKKATSIVLDSEIVLVDEHNVQLPFGSLGIHKKKEYKNSNMCLFVFDCLYFDGFDMTDIPLYKRRSFLKDVMVEIPNRIVFSELTNISNESQLTDVLDDALTRKLEGLVLKDINGVYEPGKRRWLKIKRDYLNEGSMADSADLVVLGAYYGKGAKGGIMAVFLMGCYDDESGKWKTVTKCSGHDDNTLRVLQDQLTMVKINKDPKKIPEWLVVNKIYIPDFVVEDPKQSQIWEISGAEFTSSKSHTANGISIRFPRFTRIREDKTWKESTHLNDLVNLTKS.

Glu229 is an ATP binding site. The active-site N6-AMP-lysine intermediate is Lys231. 2 residues coordinate ATP: Arg236 and Glu283. 2 residues coordinate Mg(2+): Glu283 and Glu377. 2 residues coordinate ATP: Lys382 and Lys397.

Belongs to the ATP-dependent DNA ligase family. In terms of assembly, interacts with host TOP2A and TOP2B. Requires Mg(2+) as cofactor.

Its subcellular location is the host cytoplasm. It carries out the reaction ATP + (deoxyribonucleotide)n-3'-hydroxyl + 5'-phospho-(deoxyribonucleotide)m = (deoxyribonucleotide)n+m + AMP + diphosphate.. In terms of biological role, DNA ligase that seals nicks in double-stranded DNA during DNA replication, DNA recombination and DNA repair. Recruits cellular topoisomerase II to sites of viral replication and assembly. This Homo sapiens (Human) protein is DNA ligase (OPG180).